The following is a 195-amino-acid chain: Antigenic thaumatin-like protein ARB_01183 (195 aa).

An N-terminal signal peptide occupies residues 1–22 (MHSNTAVIALSALAALVPAALA). Disulfide bonds link cysteine 125/cysteine 153 and cysteine 130/cysteine 137. Positions 171 to 195 (GPKKMFKPVQEKAANRPRHPHARPE) are disordered. The span at 185–195 (NRPRHPHARPE) shows a compositional bias: basic residues.

This sequence belongs to the thaumatin family.

It is found in the secreted. In terms of biological role, might be involved in the inhibition of growth of fungal competitors and pathogenicity. This chain is Antigenic thaumatin-like protein ARB_01183, found in Arthroderma benhamiae (strain ATCC MYA-4681 / CBS 112371) (Trichophyton mentagrophytes).